Reading from the N-terminus, the 3391-residue chain is Genome polyprotein (3391 aa).

The tract at residues 1 to 15 is interaction with host EXOC1; it reads MNNQRKKARNTPFNM. Over 1 to 101 the chain is Cytoplasmic; sequence MNNQRKKARN…LNILNRRRRT (101 aa). Positions 37 to 72 are hydrophobic; homodimerization of capsid protein C; it reads MLQGRGPLKLFMALVAFLRFLTIPPTAGILKRWGTI. The propeptide at 101–114 is ER anchor for the capsid protein C, removed in mature form by serine protease NS3; sequence TAGMIIMLIPTVMA. A helical membrane pass occupies residues 102–122; sequence AGMIIMLIPTVMAFHLTTRNG. The Extracellular segment spans residues 123–238; sequence EPHMIVSRQE…GAWKHAQRIE (116 aa). Asparagine 183 carries N-linked (GlcNAc...) asparagine; by host glycosylation. Residues 239-259 form a helical membrane-spanning segment; the sequence is TWILRHPGFTIMAAILAYTIG. Residues 260–265 are Cytoplasmic-facing; sequence TTHFQR. Residues 266-280 traverse the membrane as a helical segment; that stretch reads ALIFILLTAVAPSMT. Residues 281 to 725 are Extracellular-facing; it reads MRCIGISNRD…LHQVFGAIYG (445 aa). 4 cysteine pairs are disulfide-bonded: cysteine 283/cysteine 310, cysteine 340/cysteine 401, cysteine 354/cysteine 385, and cysteine 372/cysteine 396. The N-linked (GlcNAc...) asparagine; by host glycan is linked to asparagine 347. Residues 378–391 form a fusion peptide region; it reads DRGWGNGCGLFGKG. N-linked (GlcNAc...) asparagine; by host glycosylation occurs at asparagine 433. Cystine bridges form between cysteine 465-cysteine 565 and cysteine 582-cysteine 613. The helical transmembrane segment at 726–746 threads the bilayer; the sequence is AAFSGVSWIMKILIGVIITWI. Residues 747 to 752 lie on the Cytoplasmic side of the membrane; sequence GMNSRS. A helical membrane pass occupies residues 753 to 773; sequence TSLSVSLVLVGVVTLYLGVMV. At 774 to 1195 the chain is on the extracellular side; the sequence is QADSGCVVSW…MVGATMTDDI (422 aa). Disulfide bonds link cysteine 779–cysteine 790, cysteine 830–cysteine 918, cysteine 954–cysteine 998, cysteine 1055–cysteine 1104, cysteine 1066–cysteine 1088, and cysteine 1087–cysteine 1091. 2 N-linked (GlcNAc...) asparagine; by host glycosylation sites follow: asparagine 905 and asparagine 982. The helical transmembrane segment at 1196-1220 threads the bilayer; that stretch reads GMGVTYLALLAAFKVRPTFAAGLLL. The Cytoplasmic portion of the chain corresponds to 1221-1226; the sequence is RKLTSK. Residues 1227-1245 traverse the membrane as a helical segment; it reads ELMMTTIGIVLLSQSTIPE. Residues 1246-1269 lie on the Lumenal side of the membrane; sequence TILELTDALALGMMVLKMVRKMEK. A helical membrane pass occupies residues 1270–1290; sequence YQLAVTIMAILCVPNAVILQN. Position 1291 (alanine 1291) is a topological domain, cytoplasmic. A helical membrane pass occupies residues 1292-1310; the sequence is WKVSCTILAVVSVSPLFLT. Residues 1311–1317 lie on the Lumenal side of the membrane; that stretch reads SSQQKAD. Residues 1318–1338 traverse the membrane as a helical segment; it reads WIPLALTIKGLNPTAIFLTTL. Topologically, residues 1339-1346 are cytoplasmic; the sequence is SRTNKKRS. A helical membrane pass occupies residues 1347–1367; it reads WPLNEAIMAVGMVSILASSLL. The Lumenal portion of the chain corresponds to 1368–1370; sequence KND. Residues 1371-1391 traverse the membrane as a helical segment; the sequence is IPMTGPLVAGGLLTVCYVLTG. Residues 1392-1447 lie on the Cytoplasmic side of the membrane; the sequence is RSADLELERAADVKWEDQAEISGSSPILSITISEDGSMSIKNEEEEQTLTILIRTG. The interacts with and activates NS3 protease stretch occupies residues 1398–1437; sequence LERAADVKWEDQAEISGSSPILSITISEDGSMSIKNEEEE. Residues 1448-1468 constitute an intramembrane region (helical); that stretch reads LLVISGLFPVSIPITAAAWYL. At 1469–2147 the chain is on the cytoplasmic side; the sequence is WEVKKQRAGV…LSELPETLET (679 aa). The 178-residue stretch at 1476–1653 folds into the Peptidase S7 domain; sequence AGVLWDVPSP…EKSIEDNPEI (178 aa). Catalysis depends on charge relay system; for serine protease NS3 activity residues histidine 1526, aspartate 1550, and serine 1610. The region spanning 1655–1811 is the Helicase ATP-binding domain; it reads DDIFRKRKLT…QSNAPIMDEE (157 aa). Positions 1659-1662 are important for RNA-binding; that stretch reads RKRK. Position 1668-1675 (1668-1675) interacts with ATP; that stretch reads LHPGAGKT. Residues 1759-1762 carry the DEAH box motif; sequence DEAH. The Helicase C-terminal domain maps to 1821–1988; it reads SGHEWVTDFK…IIPSMFEPER (168 aa). An N6-acetyllysine; by host modification is found at lysine 1863. The chain crosses the membrane as a helical span at residues 2148–2168; sequence LLLLTLLATVTGGIFLFLMSG. The Lumenal segment spans residues 2169-2170; sequence RG. The segment at residues 2171–2191 is an intramembrane region (helical); it reads IGKMTLGMCCIITASILLWYA. Residue glutamine 2192 is a topological domain, lumenal. Residues 2193–2213 traverse the membrane as a helical segment; sequence IQPHWIAASIILEFFLIVLLI. At 2214–2228 the chain is on the cytoplasmic side; sequence PEPEKQRTPQDNQLT. A helical membrane pass occupies residues 2229–2249; sequence YVVIAILTVVAATMANEMGFL. The Lumenal segment spans residues 2250–2274; sequence EKTKKDLGLGSITTQQPESNILDID. The helical intramembrane region spans 2275 to 2295; it reads LRPASAWTLYAVATTFVTPML. Residues 2296–2316 are Lumenal-facing; that stretch reads RHSIENSSVNVSLTAIANQAT. N-linked (GlcNAc...) asparagine; by host glycans are attached at residues asparagine 2301 and asparagine 2305. The helical intramembrane region spans 2317–2337; it reads VLMGLGKGWPLSKMDIGVPLL. Topologically, residues 2338–2347 are lumenal; it reads AIGCYSQVNP. Residues 2348–2368 traverse the membrane as a helical segment; that stretch reads ITLTAALFLLVAHYAIIGPGL. Residues 2369 to 2413 lie on the Cytoplasmic side of the membrane; sequence QAKATREAQKRAAAGIMKNPTVDGITVIDLDPIPYDPKFEKQLGQ. The helical transmembrane segment at 2414-2434 threads the bilayer; it reads VMLLVLCVTQVLMMRTTWALC. Residues 2435–2459 are Lumenal-facing; it reads EALTLATGPISTLWEGNPGRFWNTT. Asparagine 2457 carries an N-linked (GlcNAc...) asparagine; by host glycan. Residues 2460–2480 traverse the membrane as a helical segment; sequence IAVSMANIFRGSYLAGAGLLF. Residues 2481 to 3391 lie on the Cytoplasmic side of the membrane; it reads SIMKNTTNTR…KEEEEAGVLW (911 aa). The 263-residue stretch at 2493 to 2755 folds into the mRNA cap 0-1 NS5-type MT domain; it reads TGNIGETLGE…DVDLGSGTRN (263 aa). Residue serine 2547 participates in S-adenosyl-L-methionine binding. Serine 2547 is modified (phosphoserine). Residue lysine 2552 is the For 2'-O-MTase activity of the active site. The short motif at 2568-2571 is the SUMO-interacting motif element; it reads VVDL. S-adenosyl-L-methionine-binding residues include glycine 2577, tryptophan 2578, threonine 2595, lysine 2596, aspartate 2622, and valine 2623. Catalysis depends on aspartate 2637, which acts as the For 2'-O-MTase activity. Position 2638 (isoleucine 2638) interacts with S-adenosyl-L-methionine. Active-site for 2'-O-MTase activity residues include lysine 2672 and glutamate 2708. Position 2710 (tyrosine 2710) interacts with S-adenosyl-L-methionine. Zn(2+) is bound by residues glutamate 2929, histidine 2933, cysteine 2938, and cysteine 2941. The 150-residue stretch at 3019–3168 folds into the RdRp catalytic domain; the sequence is GAMYADDTAG…KPLDDRFASA (150 aa). The Zn(2+) site is built by histidine 3203, cysteine 3219, and cysteine 3338.

This sequence in the N-terminal section; belongs to the class I-like SAM-binding methyltransferase superfamily. mRNA cap 0-1 NS5-type methyltransferase family. Homodimer. Interacts (via N-terminus) with host EXOC1 (via C-terminus); this interaction results in EXOC1 degradation through the proteasome degradation pathway. In terms of assembly, forms heterodimers with envelope protein E in the endoplasmic reticulum and Golgi. As to quaternary structure, homodimer; in the endoplasmic reticulum and Golgi. Interacts with protein prM. Interacts with non-structural protein 1. Homodimer; Homohexamer when secreted. Interacts with envelope protein E. Interacts with host PRKAA1. In terms of assembly, interacts (via N-terminus) with serine protease NS3. As to quaternary structure, forms a heterodimer with serine protease NS3. May form homooligomers. Forms a heterodimer with NS2B. Interacts with NS4B. Interacts with unphosphorylated RNA-directed RNA polymerase NS5; this interaction stimulates RNA-directed RNA polymerase NS5 guanylyltransferase activity. Interacts with host SHFL. In terms of assembly, interacts with host MAVS; this interaction inhibits the synthesis of IFN-beta. Interacts with host MAVS; this interaction inhibits the synthesis of IFN-beta. Interacts with host SHFL. Interacts with host AUP1; the interaction occurs in the presence of Dengue virus NS4B and induces lipophagy which facilitates production of virus progeny particles. May interact with host SRPRA and SEC61G. As to quaternary structure, interacts with serine protease NS. Homodimer. Interacts with host STAT2; this interaction inhibits the phosphorylation of the latter, and, when all viral proteins are present (polyprotein), targets STAT2 for degradation. Interacts with serine protease NS3. Interacts with host PAF1 complex; the interaction may prevent the recruitment of the PAF1 complex to interferon-responsive genes, and thus reduces the immune response. In terms of processing, specific enzymatic cleavages in vivo yield mature proteins. Cleavages in the lumen of endoplasmic reticulum are performed by host signal peptidase, whereas cleavages in the cytoplasmic side are performed by serine protease NS3. Signal cleavage at the 2K-4B site requires a prior NS3 protease-mediated cleavage at the 4A-2K site. Post-translationally, cleaved in post-Golgi vesicles by a host furin, releasing the mature small envelope protein M, and peptide pr. This cleavage is incomplete as up to 30% of viral particles still carry uncleaved prM. N-glycosylated. In terms of processing, N-glycosylated. The excreted form is glycosylated and this is required for efficient secretion of the protein from infected cells. Post-translationally, acetylated by host KAT5. Acetylation modulates NS3 RNA-binding and unwinding activities and plays an important positive role for viral replication. Sumoylation of RNA-directed RNA polymerase NS5 increases NS5 protein stability allowing proper viral RNA replication. In terms of processing, phosphorylated on serines residues. This phosphorylation may trigger NS5 nuclear localization.

Its subcellular location is the virion. The protein localises to the host nucleus. It localises to the host cytoplasm. It is found in the host perinuclear region. The protein resides in the secreted. Its subcellular location is the virion membrane. The protein localises to the host endoplasmic reticulum membrane. It localises to the host mitochondrion. The enzyme catalyses Selective hydrolysis of -Xaa-Xaa-|-Yaa- bonds in which each of the Xaa can be either Arg or Lys and Yaa can be either Ser or Ala.. It catalyses the reaction RNA(n) + a ribonucleoside 5'-triphosphate = RNA(n+1) + diphosphate. The catalysed reaction is a ribonucleoside 5'-triphosphate + H2O = a ribonucleoside 5'-diphosphate + phosphate + H(+). It carries out the reaction ATP + H2O = ADP + phosphate + H(+). The enzyme catalyses a 5'-end (5'-triphosphoguanosine)-ribonucleoside in mRNA + S-adenosyl-L-methionine = a 5'-end (N(7)-methyl 5'-triphosphoguanosine)-ribonucleoside in mRNA + S-adenosyl-L-homocysteine. It catalyses the reaction a 5'-end (N(7)-methyl 5'-triphosphoguanosine)-ribonucleoside in mRNA + S-adenosyl-L-methionine = a 5'-end (N(7)-methyl 5'-triphosphoguanosine)-(2'-O-methyl-ribonucleoside) in mRNA + S-adenosyl-L-homocysteine + H(+). Plays a role in virus budding by binding to the cell membrane and gathering the viral RNA into a nucleocapsid that forms the core of a mature virus particle. During virus entry, may induce genome penetration into the host cytoplasm after hemifusion induced by the surface proteins. Can migrate to the cell nucleus where it modulates host functions. Overcomes the anti-viral effects of host EXOC1 by sequestering and degrading the latter through the proteasome degradation pathway. In terms of biological role, inhibits RNA silencing by interfering with host Dicer. Functionally, prevents premature fusion activity of envelope proteins in trans-Golgi by binding to envelope protein E at pH6.0. After virion release in extracellular space, gets dissociated from E dimers. Its function is as follows. Acts as a chaperone for envelope protein E during intracellular virion assembly by masking and inactivating envelope protein E fusion peptide. prM is the only viral peptide matured by host furin in the trans-Golgi network probably to avoid catastrophic activation of the viral fusion activity in acidic Golgi compartment prior to virion release. prM-E cleavage is inefficient, and many virions are only partially matured. These uncleaved prM would play a role in immune evasion. May play a role in virus budding. Exerts cytotoxic effects by activating a mitochondrial apoptotic pathway through M ectodomain. May display a viroporin activity. In terms of biological role, binds to host cell surface receptor and mediates fusion between viral and cellular membranes. Envelope protein is synthesized in the endoplasmic reticulum in the form of heterodimer with protein prM. They play a role in virion budding in the ER, and the newly formed immature particle is covered with 60 spikes composed of heterodimer between precursor prM and envelope protein E. The virion is transported to the Golgi apparatus where the low pH causes dissociation of PrM-E heterodimers and formation of E homodimers. prM-E cleavage is inefficient, and many virions are only partially matured. These uncleaved prM would play a role in immune evasion. Functionally, involved in immune evasion, pathogenesis and viral replication. Once cleaved off the polyprotein, is targeted to three destinations: the viral replication cycle, the plasma membrane and the extracellular compartment. Essential for viral replication. Required for formation of the replication complex and recruitment of other non-structural proteins to the ER-derived membrane structures. Excreted as a hexameric lipoparticle that plays a role against host immune response. Antagonizing the complement function. Binds to the host macrophages and dendritic cells. Inhibits signal transduction originating from Toll-like receptor 3 (TLR3). Mediates complement activation, which may contribute to the pathogenesis of the vascular leakage that occurs in severe dengue disease. Activates autophagy through the AMPK/ERK/mTOR signaling pathway. Mechanistically, acts as the assembly platform for STK11-AMPK interactions and promotes STK11-AMPK interactions. In turn, promotes phosphorylation of the AMPK kinase structural domain and activates AMPK, thereby positively regulating the AMPK/ERK/mTOR signaling pathway and inducing autophagy. Its function is as follows. Disrupts the host endothelial glycocalyx layer of host pulmonary microvascular endothelial cells, inducing degradation of sialic acid and shedding of heparan sulfate proteoglycans. NS1 induces expression of sialidases, heparanase, and activates cathepsin L, which activates heparanase via enzymatic cleavage. These effects are probably linked to the endothelial hyperpermeability observed in severe dengue disease. Component of the viral RNA replication complex that functions in virion assembly and antagonizes the host immune response. In terms of biological role, required cofactor for the serine protease function of NS3. May have membrane-destabilizing activity and form viroporins. Functionally, displays three enzymatic activities: serine protease, NTPase and RNA helicase. NS3 serine protease, in association with NS2B, performs its autocleavage and cleaves the polyprotein at dibasic sites in the cytoplasm: C-prM, NS2A-NS2B, NS2B-NS3, NS3-NS4A, NS4A-2K and NS4B-NS5. NS3 RNA helicase binds RNA and unwinds dsRNA in the 3' to 5' direction. Its function is as follows. Regulates the ATPase activity of the NS3 helicase activity. NS4A allows NS3 helicase to conserve energy during unwinding. Plays a role in the inhibition of the host innate immune response. Interacts with host MAVS and thereby prevents the interaction between RIGI and MAVS. In turn, IFN-beta production is impaired. Interacts with host AUP1 which mediates induction of lipophagy in host cells and facilitates production of virus progeny particles. Functions as a signal peptide for NS4B and is required for the interferon antagonism activity of the latter. In terms of biological role, induces the formation of ER-derived membrane vesicles where the viral replication takes place. Inhibits interferon (IFN)-induced host STAT1 phosphorylation and nuclear translocation, thereby preventing the establishment of cellular antiviral state by blocking the IFN-alpha/beta pathway. Functionally, replicates the viral (+) and (-) RNA genome, and performs the capping of genomes in the cytoplasm. NS5 methylates viral RNA cap at guanine N-7 and ribose 2'-O positions. Besides its role in RNA genome replication, also prevents the establishment of cellular antiviral state by blocking the interferon-alpha/beta (IFN-alpha/beta) signaling pathway. Inhibits host TYK2 and STAT2 phosphorylation, thereby preventing activation of JAK-STAT signaling pathway. May reduce immune responses by preventing the recruitment of the host PAF1 complex to interferon-responsive genes. The sequence is that of Genome polyprotein from Aedimorphus (Red guenon).